The primary structure comprises 100 residues: Urease subunit gamma (100 aa).

It belongs to the urease gamma subunit family. As to quaternary structure, heterotrimer of UreA (gamma), UreB (beta) and UreC (alpha) subunits. Three heterotrimers associate to form the active enzyme.

The protein resides in the cytoplasm. The enzyme catalyses urea + 2 H2O + H(+) = hydrogencarbonate + 2 NH4(+). It participates in nitrogen metabolism; urea degradation; CO(2) and NH(3) from urea (urease route): step 1/1. The sequence is that of Urease subunit gamma from Corynebacterium efficiens (strain DSM 44549 / YS-314 / AJ 12310 / JCM 11189 / NBRC 100395).